The following is a 301-amino-acid chain: Acetylglutamate kinase (301 aa).

Residues 72–73, Arg-94, and Asn-199 each bind substrate; that span reads GG.

The protein belongs to the acetylglutamate kinase family. ArgB subfamily.

It is found in the cytoplasm. The catalysed reaction is N-acetyl-L-glutamate + ATP = N-acetyl-L-glutamyl 5-phosphate + ADP. Its pathway is amino-acid biosynthesis; L-arginine biosynthesis; N(2)-acetyl-L-ornithine from L-glutamate: step 2/4. Catalyzes the ATP-dependent phosphorylation of N-acetyl-L-glutamate. This chain is Acetylglutamate kinase, found in Bartonella tribocorum (strain CIP 105476 / IBS 506).